Reading from the N-terminus, the 913-residue chain is SUN domain-containing protein 1 (913 aa).

Residues methionine 1–serine 139 form an LMNA-binding region. The Nuclear portion of the chain corresponds to methionine 1–lysine 415. A phosphoserine mark is found at serine 48 and serine 66. Over residues serine 69–alanine 81 the composition is skewed to polar residues. Residues serine 69–aspartate 120 are disordered. Residues leucine 108–aspartate 120 show a composition bias toward low complexity. Serine 139 carries the post-translational modification Phosphoserine. Residues serine 209 to aspartate 302 form an SYNE2-binding region. Residues valine 223–aspartate 302 form an EMD-binding region. A helical transmembrane segment spans residues valine 416–glutamine 436. Residues glycine 437 to glutamine 913 lie on the Perinuclear space side of the membrane. The interval arginine 456–proline 485 is disordered. Coiled-coil stretches lie at residues glycine 491–serine 533 and histidine 563–alanine 638. The interval threonine 703 to glutamine 913 is sufficient for interaction with SYNE1 and SYNE2. Residues glycine 751–isoleucine 912 enclose the SUN domain.

As to quaternary structure, core component of the LINC complex which is composed of inner nuclear membrane SUN domain-containing proteins coupled to outer nuclear membrane KASH domain-containing nesprins. SUN and KASH domain-containing proteins seem to bind each other promiscuously; however, differentially expression of LINC complex constituents is giving rise to specific assemblies. At least SUN1/2-containing core LINC complexes are proposed to be hexameric composed of three protomers of each KASH and SUN domain-containing protein. Interacts with KASH5 (via the last 22 amino acids); this interaction mediates KASH5 telomere localization by forming a SUN1:KASH5 LINC complex. Isoform 5 is proposed to form a non-nuclear spermatogenesis-specific LINC complex with SYNE3 during sperm head formation. Interacts with SYNE2 and SYNE1; probably forming respective LINC complexes. Interacts with A-type lamin with a strong preference for unprocessed A-type lamin compared with the mature protein. Interaction with lamins B1 and C is hardly detectable. Interacts with NAT10. Interacts with EMD and TSNAX. Associates with the nuclear pore complex (NPC). Interacts with CCDC79/TERB1; promoting the accumulation of the LINC complex complexes at the telomere-nuclear envelope attachment sites. Interacts with IRAG2. Interacts (via KASH domain) with TMEM258. Post-translationally, the disulfide bond with KASH domain-containing nesprins is required for stability of the respective LINC complexes under tensile forces. As to expression, widely expressed. Expressed in cochlear outer hair cells (at protein level). Seven isoforms are expressed in testis including testis-specific isoform 5. Isoform 5 is the only isoform expressed at the end of sperm differentiation. Six isoforms are expressed in muscle, heart and brain, four isoforms in kidney and three isoforms in liver.

Its subcellular location is the nucleus inner membrane. The protein localises to the cytoplasmic vesicle. It is found in the secretory vesicle. The protein resides in the acrosome outer membrane. Functionally, as a component of the LINC (LInker of Nucleoskeleton and Cytoskeleton) complex involved in the connection between the nuclear lamina and the cytoskeleton. The nucleocytoplasmic interactions established by the LINC complex play an important role in the transmission of mechanical forces across the nuclear envelope and in nuclear movement and positioning. Required for interkinetic nuclear migration (INM) and essential for nucleokinesis and centrosome-nucleus coupling during radial neuronal migration in the cerebral cortex and during glial migration. Involved in telomere attachment to nuclear envelope in the prophase of meiosis implicating a SUN1/2:KASH5 LINC complex in which SUN1 and SUN2 seem to act at least partial redundantly. Required for gametogenesis and involved in selective gene expression of coding and non-coding RNAs needed for gametogenesis. Helps to define the distribution of nuclear pore complexes (NPCs). Required for efficient localization of SYNE4 in the nuclear envelope. May be involved in nuclear remodeling during sperm head formation in spermatogenesis. May play a role in DNA repair by suppressing non-homologous end joining repair to facilitate the repair of DNA cross-links. Isoform 5 may be involved in nuclear remodeling during sperm head formation in spermatogenesis. A probable SUN1 isoform 5:SYNE3 LINC complex may tether spermatid nuclei to anterior cytoskeletal structures such as actin filaments present at membraneous junctions of spermatids and Sertoli cells. In Mus musculus (Mouse), this protein is SUN domain-containing protein 1.